The primary structure comprises 115 residues: Vespryn (115 aa).

The first 15 residues, 1-15 (MTWLLLCLLAQYENG), serve as a signal peptide directing secretion. The region spanning 22 to 115 (SSSAKPYKTS…VKRKDHLRLT (94 aa)) is the B30.2/SPRY domain.

This sequence belongs to the ohanin/vespryn family. Expressed by the venom gland.

Its subcellular location is the secreted. In terms of biological role, neurotoxin that produces dose-dependent hypolocomotion and hyperalgesia in mice. May directly act on the central nervous system, as it is 6500-fold more potent when administered intracerebroventricularly than intraperitoneal. This is Vespryn from Pogona barbata (Bearded dragon).